The sequence spans 152 residues: Large ribosomal subunit protein uL15 (152 aa).

A disordered region spans residues 1–55 (MRLHELKPNEGATHKKKRVGRGIGSGHGKTSTKGQKGQTSRSGDSKLPARFEGGQ). Positions 28-42 (GKTSTKGQKGQTSRS) are enriched in polar residues.

It belongs to the universal ribosomal protein uL15 family. Part of the 50S ribosomal subunit.

In terms of biological role, binds to the 23S rRNA. The polypeptide is Large ribosomal subunit protein uL15 (Sulfurihydrogenibium sp. (strain YO3AOP1)).